The sequence spans 319 residues: Cobalamin biosynthesis protein CobD (319 aa).

Helical transmembrane passes span 56-76 (GLWI…LWLM), 153-173 (VDGV…LAMA), 204-224 (LANW…AWFI), and 290-310 (IPLS…LFAL).

Belongs to the CobD/CbiB family.

The protein resides in the cell membrane. It participates in cofactor biosynthesis; adenosylcobalamin biosynthesis. Converts cobyric acid to cobinamide by the addition of aminopropanol on the F carboxylic group. The sequence is that of Cobalamin biosynthesis protein CobD from Photorhabdus laumondii subsp. laumondii (strain DSM 15139 / CIP 105565 / TT01) (Photorhabdus luminescens subsp. laumondii).